We begin with the raw amino-acid sequence, 367 residues long: Undecaprenyl-phosphate alpha-N-acetylglucosaminyl 1-phosphate transferase (367 aa).

The next 10 membrane-spanning stretches (helical) occupy residues 3–23 (LLTV…FLFF), 46–66 (LIPL…FGIV), 69–89 (YIPH…IGAL), 132–152 (VLGP…INAF), 158–178 (IDGL…MILW), 187–207 (IWCF…LGIL), 213–233 (VFMG…ILLE), 242–262 (ISPV…VAIM), 294–314 (AFVL…LAEY), and 318–338 (VPEW…GYCI).

It belongs to the glycosyltransferase 4 family. WecA subfamily. Mg(2+) is required as a cofactor. Mn(2+) serves as cofactor.

It localises to the cell inner membrane. It carries out the reaction di-trans,octa-cis-undecaprenyl phosphate + UDP-N-acetyl-alpha-D-glucosamine = N-acetyl-alpha-D-glucosaminyl-di-trans,octa-cis-undecaprenyl diphosphate + UMP. It participates in bacterial outer membrane biogenesis; LPS O-antigen biosynthesis. It functions in the pathway bacterial outer membrane biogenesis; enterobacterial common antigen biosynthesis. Functionally, catalyzes the transfer of the GlcNAc-1-phosphate moiety from UDP-GlcNAc onto the carrier lipid undecaprenyl phosphate (C55-P), yielding GlcNAc-pyrophosphoryl-undecaprenyl (GlcNAc-PP-C55). The sequence is that of Undecaprenyl-phosphate alpha-N-acetylglucosaminyl 1-phosphate transferase from Escherichia coli O6:H1 (strain CFT073 / ATCC 700928 / UPEC).